A 1257-amino-acid polypeptide reads, in one-letter code: Liprin-alpha-2 (1257 aa).

Disordered regions lie at residues 1–29 (MMCE…DSDS), 231–265 (ASSE…DSTD), and 438–463 (EGQL…EHNK). Over residues 16–26 (SQRGSQSSGSD) the composition is skewed to low complexity. Coiled-coil stretches lie at residues 29–154 (SHFE…SLRM), 185–541 (KALD…SLIE), and 643–695 (HSDA…GLNL). Ser236 is subject to Phosphoserine. Thr237 carries the phosphothreonine modification. The span at 238–256 (ESEHLEGMEPGQKVHEKRL) shows a compositional bias: basic and acidic residues. The residue at position 239 (Ser239) is a Phosphoserine. Phosphoserine is present on residues Ser687 and Ser689. Composition is skewed to low complexity over residues 709–725 (TASS…HSTP) and 798–813 (SSLS…GLGS). 2 disordered regions span residues 709-738 (TASS…EMDR) and 790-834 (SSYH…KSSI). Ser817 and Ser820 each carry phosphoserine. SAM domains follow at residues 898-964 (WDGP…MVSL), 1020-1084 (NHEW…LKRL), and 1108-1177 (WSND…LLAL). A coiled-coil region spans residues 1081–1107 (LKRLNYDRKELERRREASQHEIKDVLV).

This sequence belongs to the liprin family. Liprin-alpha subfamily. In terms of assembly, forms homodimers and heterodimers with liprins-alpha and liprins-beta. Interacts with the second PTPase domain of PTPRD, PTPRF and PTPRS. Interacts with KIF1A; the interaction decreases in presence of calcium. In terms of tissue distribution, expressed only in brain.

It localises to the cytoplasm. Its subcellular location is the cell surface. The protein resides in the cell projection. The protein localises to the dendritic spine. Its function is as follows. Alters PTPRF cellular localization and induces PTPRF clustering. May regulate the disassembly of focal adhesions. May localize receptor-like tyrosine phosphatases type 2A at specific sites on the plasma membrane, possibly regulating their interaction with the extracellular environment and their association with substrates. In neuronal cells, is a scaffolding protein in the dendritic spines which acts as immobile postsynaptic post able to recruit KIF1A-driven dense core vesicles to dendritic spines. The polypeptide is Liprin-alpha-2 (PPFIA2) (Homo sapiens (Human)).